The chain runs to 393 residues: D-alanyl-D-alanine carboxypeptidase DacA (393 aa).

Residues 1–18 (MLKRTTKIAFLSSFVALS) form the signal peptide. Ser-65 serves as the catalytic Acyl-ester intermediate. The Proton acceptor role is filled by Lys-68. Ser-128 is an active-site residue. Position 231 (Lys-231) interacts with substrate.

Belongs to the peptidase S11 family.

The protein localises to the cell inner membrane. The enzyme catalyses Preferential cleavage: (Ac)2-L-Lys-D-Ala-|-D-Ala. Also transpeptidation of peptidyl-alanyl moieties that are N-acyl substituents of D-alanine.. It participates in cell wall biogenesis; peptidoglycan biosynthesis. In terms of biological role, removes C-terminal D-alanyl residues from sugar-peptide cell wall precursors. This chain is D-alanyl-D-alanine carboxypeptidase DacA (dacA), found in Haemophilus influenzae (strain ATCC 51907 / DSM 11121 / KW20 / Rd).